A 568-amino-acid chain; its full sequence is Urease subunit alpha (568 aa).

Residues 130–568 (GGIDTHIHFI…LPMAQRYFLF (439 aa)) enclose the Urease domain. Ni(2+) contacts are provided by H135, H137, and K218. An N6-carboxylysine modification is found at K218. H220 contacts substrate. Ni(2+) is bound by residues H247 and H273. H321 serves as the catalytic Proton donor. D361 provides a ligand contact to Ni(2+).

Belongs to the metallo-dependent hydrolases superfamily. Urease alpha subunit family. As to quaternary structure, heterotrimer of UreA (gamma), UreB (beta) and UreC (alpha) subunits. Three heterotrimers associate to form the active enzyme. Requires Ni cation as cofactor. Post-translationally, carboxylation allows a single lysine to coordinate two nickel ions.

The protein resides in the cytoplasm. The enzyme catalyses urea + 2 H2O + H(+) = hydrogencarbonate + 2 NH4(+). Its pathway is nitrogen metabolism; urea degradation; CO(2) and NH(3) from urea (urease route): step 1/1. This is Urease subunit alpha from Burkholderia pseudomallei (strain K96243).